Here is a 243-residue protein sequence, read N- to C-terminus: Triosephosphate isomerase (243 aa).

9–11 (NWK) contributes to the substrate binding site. The active-site Electrophile is His96. The active-site Proton acceptor is the Glu165. Residues Gly171, Ser204, and 225–226 (GG) each bind substrate.

The protein belongs to the triosephosphate isomerase family. Homodimer.

The protein resides in the cytoplasm. The catalysed reaction is D-glyceraldehyde 3-phosphate = dihydroxyacetone phosphate. It participates in carbohydrate biosynthesis; gluconeogenesis. It functions in the pathway carbohydrate degradation; glycolysis; D-glyceraldehyde 3-phosphate from glycerone phosphate: step 1/1. Functionally, involved in the gluconeogenesis. Catalyzes stereospecifically the conversion of dihydroxyacetone phosphate (DHAP) to D-glyceraldehyde-3-phosphate (G3P). This is Triosephosphate isomerase from Nostoc punctiforme (strain ATCC 29133 / PCC 73102).